We begin with the raw amino-acid sequence, 269 residues long: Undecaprenyl-diphosphatase (269 aa).

6 helical membrane-spanning segments follow: residues 43–63, 82–102, 108–128, 188–208, 222–242, and 249–269; these read KGKV…CWEY, FILN…LLHG, LFSS…ILLV, ATEF…FYDV, MFAV…KTLI, and DFKG…AYYW.

It belongs to the UppP family.

The protein resides in the cell inner membrane. The catalysed reaction is di-trans,octa-cis-undecaprenyl diphosphate + H2O = di-trans,octa-cis-undecaprenyl phosphate + phosphate + H(+). Functionally, catalyzes the dephosphorylation of undecaprenyl diphosphate (UPP). Confers resistance to bacitracin. The polypeptide is Undecaprenyl-diphosphatase (Methylobacillus flagellatus (strain ATCC 51484 / DSM 6875 / VKM B-1610 / KT)).